A 172-amino-acid polypeptide reads, in one-letter code: uncharacterized protein (172 aa).

Helical transmembrane passes span 46–66 (MFSI…FLYP), 76–96 (LLSL…VGLF), 104–124 (WKFL…LGWS), and 129–149 (FFYA…FTEI).

It is found in the endoplasmic reticulum membrane. This is an uncharacterized protein from Schizosaccharomyces pombe (strain 972 / ATCC 24843) (Fission yeast).